The primary structure comprises 258 residues: Hydroxyacylglutathione hydrolase (258 aa).

The Zn(2+) site is built by His52, His54, Asp56, His57, His109, Asp126, and His164.

Belongs to the metallo-beta-lactamase superfamily. Glyoxalase II family. In terms of assembly, monomer. Zn(2+) serves as cofactor.

It catalyses the reaction an S-(2-hydroxyacyl)glutathione + H2O = a 2-hydroxy carboxylate + glutathione + H(+). It functions in the pathway secondary metabolite metabolism; methylglyoxal degradation; (R)-lactate from methylglyoxal: step 2/2. Thiolesterase that catalyzes the hydrolysis of S-D-lactoyl-glutathione to form glutathione and D-lactic acid. The protein is Hydroxyacylglutathione hydrolase of Xylella fastidiosa (strain M23).